A 700-amino-acid polypeptide reads, in one-letter code: DNA ligase (700 aa).

NAD(+)-binding positions include 61–65, 110–111, and E141; these read DAEYD and SL. The active-site N6-AMP-lysine intermediate is K143. Residues R164, E202, K321, and K345 each contribute to the NAD(+) site. Zn(2+) contacts are provided by C439, C442, C457, and C462. In terms of domain architecture, BRCT spans 619–700; that stretch reads AVSNKLAGLQ…EFLRLLEDSK (82 aa).

The protein belongs to the NAD-dependent DNA ligase family. LigA subfamily. Mg(2+) is required as a cofactor. The cofactor is Mn(2+).

The catalysed reaction is NAD(+) + (deoxyribonucleotide)n-3'-hydroxyl + 5'-phospho-(deoxyribonucleotide)m = (deoxyribonucleotide)n+m + AMP + beta-nicotinamide D-nucleotide.. Functionally, DNA ligase that catalyzes the formation of phosphodiester linkages between 5'-phosphoryl and 3'-hydroxyl groups in double-stranded DNA using NAD as a coenzyme and as the energy source for the reaction. It is essential for DNA replication and repair of damaged DNA. This Hydrogenobaculum sp. (strain Y04AAS1) protein is DNA ligase.